A 342-amino-acid polypeptide reads, in one-letter code: Isopentenyl-diphosphate delta-isomerase (342 aa).

11–12 contacts substrate; that stretch reads RK. FMN contacts are provided by residues S68, 69 to 71, S99, and N127; that span reads SMT. Position 99–101 (99–101) interacts with substrate; the sequence is SMR. A substrate-binding site is contributed by Q162. Position 163 (E163) interacts with Mg(2+). FMN contacts are provided by residues K194, T224, 274 to 276, and 295 to 296; these read GLK and AG.

Belongs to the IPP isomerase type 2 family. As to quaternary structure, homooctamer. Dimer of tetramers. Requires FMN as cofactor. NADPH is required as a cofactor. Mg(2+) serves as cofactor.

Its subcellular location is the cytoplasm. It carries out the reaction isopentenyl diphosphate = dimethylallyl diphosphate. Functionally, involved in the biosynthesis of isoprenoids. Catalyzes the 1,3-allylic rearrangement of the homoallylic substrate isopentenyl (IPP) to its allylic isomer, dimethylallyl diphosphate (DMAPP). This chain is Isopentenyl-diphosphate delta-isomerase, found in Rickettsia africae (strain ESF-5).